We begin with the raw amino-acid sequence, 590 residues long: Aspartate--tRNA(Asp/Asn) ligase (590 aa).

Glu-169 contributes to the L-aspartate binding site. The tract at residues 193 to 196 (QLFK) is aspartate. Position 215 (Arg-215) interacts with L-aspartate. Residues 215–217 (RDE) and Gln-224 each bind ATP. Residue His-447 coordinates L-aspartate. Glu-479 contributes to the ATP binding site. Arg-486 provides a ligand contact to L-aspartate. 531–534 (GWDR) serves as a coordination point for ATP. Positions 556 to 590 (GGFDPLTAAPAPITPEQRKEAGVDARPQQDLPPQS) are disordered.

Belongs to the class-II aminoacyl-tRNA synthetase family. Type 1 subfamily. Homodimer.

Its subcellular location is the cytoplasm. The enzyme catalyses tRNA(Asx) + L-aspartate + ATP = L-aspartyl-tRNA(Asx) + AMP + diphosphate. Functionally, aspartyl-tRNA synthetase with relaxed tRNA specificity since it is able to aspartylate not only its cognate tRNA(Asp) but also tRNA(Asn). Reaction proceeds in two steps: L-aspartate is first activated by ATP to form Asp-AMP and then transferred to the acceptor end of tRNA(Asp/Asn). The polypeptide is Aspartate--tRNA(Asp/Asn) ligase (Nocardioides sp. (strain ATCC BAA-499 / JS614)).